Here is a 107-residue protein sequence, read N- to C-terminus: Guanine nucleotide-binding protein G(I)/G(S)/G(O) subunit gamma-14 (107 aa).

In terms of domain architecture, G protein gamma spans 69–107 (KMAADLLKFCTEQAKNDPFLVGIPAATNSFKEKKPYAIL).

It belongs to the G protein gamma family. In terms of assembly, g proteins are composed of 3 units; alpha, beta and gamma.

The protein localises to the cell membrane. Functionally, guanine nucleotide-binding proteins (G proteins) are involved as a modulator or transducer in various transmembrane signaling systems. The beta and gamma chains are required for the GTPase activity, for replacement of GDP by GTP, and for G protein-effector interaction. This Homo sapiens (Human) protein is Guanine nucleotide-binding protein G(I)/G(S)/G(O) subunit gamma-14.